Reading from the N-terminus, the 599-residue chain is Cytochrome P450 monooxygenase ALT8 (599 aa).

Transmembrane regions (helical) follow at residues 4-21 (LACV…VYLG) and 36-56 (ILFG…PAYF). The N-linked (GlcNAc...) asparagine glycan is linked to N127. The span at 495-504 (DDSSAASPSF) shows a compositional bias: low complexity. The interval 495–522 (DDSSAASPSFGGSGKRKSQYTDTHKEPS) is disordered. Heme is bound at residue C539.

Belongs to the cytochrome P450 family. Heme serves as cofactor.

The protein localises to the membrane. It functions in the pathway secondary metabolite biosynthesis. Its function is as follows. Cytochrome P450 monooxygenase; part of the gene cluster that mediates the biosynthesis of the host-selective toxins (HSTs) AAL-toxins, sphinganine-analog mycotoxins responsible for Alternaria stem canker on tomato by the tomato pathotype. The biosynthesis starts with the polyketide synthase ALT1-catalyzed C-16 carbon chain assembly from one starter acetyl-CoA unit with malonyl-CoA extender units. ALT1 also selectively transfers methyl groups at the first and the third cycle of chain elongation for AAL toxin. The C-16 polyketide chain is released from the enzyme by a nucleophilic attack of a carbanion, which is derived from R-carbon of glycin by decarboxylation, on the carbonyl carbon of polyketide acyl chain. This step is probably catalyzed by a pyridoxal 5'-phosphate-dependent aminoacyl transferase ALT4. The respective functions of the other enzymes encoded by the cluster have still to be elucidated. The sphingosine N-acyltransferase-like protein ALT7 seems not to act as a resistance/self-tolerance factor against the toxin in the toxin biosynthetic gene cluster, contrary to what is expected. The sequence is that of Cytochrome P450 monooxygenase ALT8 from Alternaria alternata (Alternaria rot fungus).